A 145-amino-acid polypeptide reads, in one-letter code: 3-dehydroquinate dehydratase (145 aa).

Tyr-22 (proton acceptor) is an active-site residue. Asn-71, His-77, and Asp-84 together coordinate substrate. The active-site Proton donor is His-97. Residues 98–99 (LS) and Arg-108 each bind substrate.

The protein belongs to the type-II 3-dehydroquinase family. In terms of assembly, homododecamer.

The catalysed reaction is 3-dehydroquinate = 3-dehydroshikimate + H2O. Its pathway is metabolic intermediate biosynthesis; chorismate biosynthesis; chorismate from D-erythrose 4-phosphate and phosphoenolpyruvate: step 3/7. Catalyzes a trans-dehydration via an enolate intermediate. This chain is 3-dehydroquinate dehydratase, found in Francisella tularensis subsp. mediasiatica (strain FSC147).